We begin with the raw amino-acid sequence, 160 residues long: Cytochrome b6-f complex subunit 4 (160 aa).

3 helical membrane-spanning segments follow: residues 36 to 56 (LLYIFPVVIFGTFACCIGLAV), 95 to 115 (LLGVLAMAAVPVGLLTVPFIE), and 131 to 151 (ILFLVGTLVAVWLGIGATFPI).

It belongs to the cytochrome b family. PetD subfamily. As to quaternary structure, the 4 large subunits of the cytochrome b6-f complex are cytochrome b6, subunit IV (17 kDa polypeptide, petD), cytochrome f and the Rieske protein, while the 4 small subunits are petG, petL, petM and petN. The complex functions as a dimer.

It is found in the plastid. Its subcellular location is the chloroplast thylakoid membrane. In terms of biological role, component of the cytochrome b6-f complex, which mediates electron transfer between photosystem II (PSII) and photosystem I (PSI), cyclic electron flow around PSI, and state transitions. In Chlamydomonas moewusii (Chlamydomonas eugametos), this protein is Cytochrome b6-f complex subunit 4.